Reading from the N-terminus, the 219-residue chain is MSMGLEITGTSLAVLGWLCTIVCCALPMWRVSAFIGSSIITAQITWEGLWMNCVVQSTGQMQCKMYDSLLALPQDLQAARALIVVSILLAAFGLLVALVGAQCTNCVQDETAKAKITIVAGVLFLLAAVLTLVPVSWSANTIIRDFYNPLVPEAQKREMGTGLYVGWAAAALQLLGGALLCCSCPPREKYAPTKILYSAPRSTGPGTGTGTAYDRKDYV.

Residues 1–8 (MSMGLEIT) lie on the Cytoplasmic side of the membrane. Residues 9 to 29 (GTSLAVLGWLCTIVCCALPMW) form a helical membrane-spanning segment. At 30–80 (RVSAFIGSSIITAQITWEGLWMNCVVQSTGQMQCKMYDSLLALPQDLQAAR) the chain is on the extracellular side. A helical membrane pass occupies residues 81–101 (ALIVVSILLAAFGLLVALVGA). Over 102–115 (QCTNCVQDETAKAK) the chain is Cytoplasmic. The helical transmembrane segment at 116–136 (ITIVAGVLFLLAAVLTLVPVS) threads the bilayer. Over 137-161 (WSANTIIRDFYNPLVPEAQKREMGT) the chain is Extracellular. The helical transmembrane segment at 162 to 182 (GLYVGWAAAALQLLGGALLCC) threads the bilayer. Residues 183–219 (SCPPREKYAPTKILYSAPRSTGPGTGTGTAYDRKDYV) are Cytoplasmic-facing. Residue Tyr197 is modified to Phosphotyrosine. The residue at position 198 (Ser198) is a Phosphoserine. An interactions with TJP1, TJP2 and TJP3 region spans residues 218 to 219 (YV).

It belongs to the claudin family. Can form homo- and heteropolymers with other CLDN. Homopolymers interact with CLDN1 and CLDN2 homopolymers. Interacts in cis (within the same plasma membrane) with CLDN19. Directly interacts with TJP1/ZO-1, TJP2/ZO-2 and TJP3/ZO-3.

Its subcellular location is the cell junction. The protein resides in the tight junction. It is found in the cell membrane. In terms of biological role, plays a major role in tight junction-specific obliteration of the intercellular space, through calcium-independent cell-adhesion activity. The sequence is that of Claudin-3 (Cldn3) from Rattus norvegicus (Rat).